Consider the following 189-residue polypeptide: Marginal zone B- and B1-cell-specific protein (189 aa).

Residues 1–22 (MRLSLPLLLLLLGAWAIPGGLG) form the signal peptide. Intrachain disulfides connect Cys50/Cys178, Cys53/Cys171, and Cys95/Cys143. The Prevents secretion from ER signature appears at 186 to 189 (REEL).

It belongs to the MZB1 family. In terms of assembly, part of the ER chaperone complex, a multi-protein complex in the endoplasmic reticulum containing a large number of molecular chaperones which associates with unassembled incompletely folded immunoglobulin heavy chains. Isoform 2 interacts with CASP2 and CASP9. Interacts with HSP90B1 and PDIA3 in a calcium-dependent manner. Post-translationally, forms an interchain disulfide bond with IgM monomers. Widely expressed with highest levels in adult brain, small intestine and lymphoid tissues such as thymus and spleen. Expression is frequently lower in intestinal-type gastric cancer. In obese patients, more abundant in omental than in subcutaneous fat.

It is found in the endoplasmic reticulum lumen. Its subcellular location is the secreted. The protein resides in the cytoplasm. Associates with immunoglobulin M (IgM) heavy and light chains and promotes IgM assembly and secretion. May exert its effect by acting as a molecular chaperone or as an oxidoreductase as it displays a low level of oxidoreductase activity. Isoform 2 may be involved in regulation of apoptosis. Helps to diversify peripheral B-cell functions by regulating Ca(2+) stores, antibody secretion and integrin activation. Its function is as follows. Acts as a hormone-regulated adipokine/pro-inflammatory cytokine that is implicated in causing chronic inflammation, affecting cellular expansion and blunting insulin response in adipocytes. May have a role in the onset of insulin resistance. This Homo sapiens (Human) protein is Marginal zone B- and B1-cell-specific protein (MZB1).